The sequence spans 288 residues: 4-hydroxybenzoate octaprenyltransferase (288 aa).

8 helical membrane passes run 23-43, 46-66, 98-118, 141-161, 163-183, 213-233, 234-254, and 268-288; these read IGSL…GRGI, AKIL…GCVV, ILFV…NSMT, LPQV…FAAV, ESLP…TVAY, LIIG…GWLM, NLGG…THQQ, and AFLN…ISYW.

Belongs to the UbiA prenyltransferase family. The cofactor is Mg(2+).

Its subcellular location is the cell inner membrane. The catalysed reaction is all-trans-octaprenyl diphosphate + 4-hydroxybenzoate = 4-hydroxy-3-(all-trans-octaprenyl)benzoate + diphosphate. Its pathway is cofactor biosynthesis; ubiquinone biosynthesis. Its function is as follows. Catalyzes the prenylation of para-hydroxybenzoate (PHB) with an all-trans polyprenyl group. Mediates the second step in the final reaction sequence of ubiquinone-8 (UQ-8) biosynthesis, which is the condensation of the polyisoprenoid side chain with PHB, generating the first membrane-bound Q intermediate 3-octaprenyl-4-hydroxybenzoate. This chain is 4-hydroxybenzoate octaprenyltransferase, found in Yersinia pseudotuberculosis serotype O:1b (strain IP 31758).